A 228-amino-acid polypeptide reads, in one-letter code: Uracil-DNA glycosylase (228 aa).

Catalysis depends on aspartate 71, which acts as the Proton acceptor.

This sequence belongs to the uracil-DNA glycosylase (UDG) superfamily. UNG family.

It is found in the cytoplasm. It carries out the reaction Hydrolyzes single-stranded DNA or mismatched double-stranded DNA and polynucleotides, releasing free uracil.. Its function is as follows. Excises uracil residues from the DNA which can arise as a result of misincorporation of dUMP residues by DNA polymerase or due to deamination of cytosine. The chain is Uracil-DNA glycosylase from Thermobifida fusca (strain YX).